A 1066-amino-acid polypeptide reads, in one-letter code: Coiled-coil domain-containing protein 73 (1066 aa).

Coiled-coil stretches lie at residues 47 to 134 (KAET…QVSQ) and 178 to 391 (LVRE…KTEE). 5 disordered regions span residues 568-600 (LDTR…SNPF), 719-811 (SENS…PKSG), 854-883 (LSPA…PEKT), 944-978 (KNIE…EERN), and 1003-1027 (VQQS…PGNN). Polar residues-rich tracts occupy residues 591 to 600 (NTDGSESNPF), 742 to 781 (RTNT…TSQA), 789 to 811 (PLTT…PKSG), 857 to 869 (ATPS…TSAR), and 948 to 964 (SDPT…SNWS). Positions 967 to 978 (LDPKGQPREERN) are enriched in basic and acidic residues. The span at 1003 to 1013 (VQQSHSQTVKV) shows a compositional bias: polar residues.

In Mus musculus (Mouse), this protein is Coiled-coil domain-containing protein 73 (Ccdc73).